Reading from the N-terminus, the 325-residue chain is DNA-directed RNA polymerase subunit alpha (325 aa).

Residues 1–231 (MQTSLLKPKI…DQLSVFAALE (231 aa)) are alpha N-terminal domain (alpha-NTD). Residues 246 to 325 (IDPILLRPVD…ENWPPAGLDK (80 aa)) are alpha C-terminal domain (alpha-CTD).

This sequence belongs to the RNA polymerase alpha chain family. As to quaternary structure, homodimer. The RNAP catalytic core consists of 2 alpha, 1 beta, 1 beta' and 1 omega subunit. When a sigma factor is associated with the core the holoenzyme is formed, which can initiate transcription.

It carries out the reaction RNA(n) + a ribonucleoside 5'-triphosphate = RNA(n+1) + diphosphate. Functionally, DNA-dependent RNA polymerase catalyzes the transcription of DNA into RNA using the four ribonucleoside triphosphates as substrates. The chain is DNA-directed RNA polymerase subunit alpha from Paraburkholderia phymatum (strain DSM 17167 / CIP 108236 / LMG 21445 / STM815) (Burkholderia phymatum).